The following is a 292-amino-acid chain: Sulfofructosephosphate aldolase (292 aa).

Residue K193 is the Schiff-base intermediate with substrate of the active site.

This sequence belongs to the aldolase LacD family. Homotetramer.

It catalyses the reaction 6-deoxy-6-sulfo-D-fructose 1-phosphate = (2S)-3-sulfolactaldehyde + dihydroxyacetone phosphate. In terms of biological role, cleaves 6-deoxy-6-sulfo-D-fructose 1-phosphate (SFP) to form dihydroxyacetone phosphate (DHAP) and 3-sulfolactaldehyde (SLA). This is Sulfofructosephosphate aldolase (yihT) from Escherichia coli (strain K12).